Here is a 274-residue protein sequence, read N- to C-terminus: 2,3,4,5-tetrahydropyridine-2,6-dicarboxylate N-succinyltransferase (274 aa).

Residues Arg-106 and Asp-143 each coordinate substrate.

The protein belongs to the transferase hexapeptide repeat family. In terms of assembly, homotrimer.

It localises to the cytoplasm. It catalyses the reaction (S)-2,3,4,5-tetrahydrodipicolinate + succinyl-CoA + H2O = (S)-2-succinylamino-6-oxoheptanedioate + CoA. Its pathway is amino-acid biosynthesis; L-lysine biosynthesis via DAP pathway; LL-2,6-diaminopimelate from (S)-tetrahydrodipicolinate (succinylase route): step 1/3. The polypeptide is 2,3,4,5-tetrahydropyridine-2,6-dicarboxylate N-succinyltransferase (Acidovorax sp. (strain JS42)).